The sequence spans 362 residues: Peptide chain release factor 1 (362 aa).

Gln-237 bears the N5-methylglutamine mark.

The protein belongs to the prokaryotic/mitochondrial release factor family. In terms of processing, methylated by PrmC. Methylation increases the termination efficiency of RF1.

It localises to the cytoplasm. Its function is as follows. Peptide chain release factor 1 directs the termination of translation in response to the peptide chain termination codons UAG and UAA. The protein is Peptide chain release factor 1 of Legionella pneumophila (strain Corby).